The following is a 431-amino-acid chain: Phosphomethylpyrimidine synthase (431 aa).

Substrate is bound by residues N66, M95, Y124, H163, 185 to 187 (SRG), 226 to 229 (DGLR), and E265. H269 serves as a coordination point for Zn(2+). Residue Y292 participates in substrate binding. H333 is a Zn(2+) binding site. [4Fe-4S] cluster contacts are provided by C408, C411, and C415.

Belongs to the ThiC family. [4Fe-4S] cluster serves as cofactor.

It carries out the reaction 5-amino-1-(5-phospho-beta-D-ribosyl)imidazole + S-adenosyl-L-methionine = 4-amino-2-methyl-5-(phosphooxymethyl)pyrimidine + CO + 5'-deoxyadenosine + formate + L-methionine + 3 H(+). The protein operates within cofactor biosynthesis; thiamine diphosphate biosynthesis. In terms of biological role, catalyzes the synthesis of the hydroxymethylpyrimidine phosphate (HMP-P) moiety of thiamine from aminoimidazole ribotide (AIR) in a radical S-adenosyl-L-methionine (SAM)-dependent reaction. The chain is Phosphomethylpyrimidine synthase from Dehalococcoides mccartyi (strain ATCC BAA-2100 / JCM 16839 / KCTC 5957 / BAV1).